Here is a 215-residue protein sequence, read N- to C-terminus: Uridine kinase (215 aa).

16–23 (GASASGKS) is a binding site for ATP.

The protein belongs to the uridine kinase family.

It is found in the cytoplasm. The enzyme catalyses uridine + ATP = UMP + ADP + H(+). The catalysed reaction is cytidine + ATP = CMP + ADP + H(+). It participates in pyrimidine metabolism; CTP biosynthesis via salvage pathway; CTP from cytidine: step 1/3. It functions in the pathway pyrimidine metabolism; UMP biosynthesis via salvage pathway; UMP from uridine: step 1/1. The protein is Uridine kinase of Aliivibrio fischeri (strain ATCC 700601 / ES114) (Vibrio fischeri).